A 336-amino-acid chain; its full sequence is Fructose-1,6-bisphosphatase class 1 (336 aa).

Mg(2+) contacts are provided by glutamate 90, aspartate 112, leucine 114, and aspartate 115. Residues 115–118 (DGSS), asparagine 211, and lysine 277 contribute to the substrate site. Glutamate 283 lines the Mg(2+) pocket.

The protein belongs to the FBPase class 1 family. In terms of assembly, homotetramer. Mg(2+) serves as cofactor.

It localises to the cytoplasm. The catalysed reaction is beta-D-fructose 1,6-bisphosphate + H2O = beta-D-fructose 6-phosphate + phosphate. It functions in the pathway carbohydrate biosynthesis; gluconeogenesis. This Pseudomonas savastanoi pv. phaseolicola (strain 1448A / Race 6) (Pseudomonas syringae pv. phaseolicola (strain 1448A / Race 6)) protein is Fructose-1,6-bisphosphatase class 1.